Consider the following 67-residue polypeptide: Large ribosomal subunit protein bL32 (67 aa).

Residues M1–W20 show a composition bias toward basic residues. Residues M1–A24 form a disordered region.

This sequence belongs to the bacterial ribosomal protein bL32 family.

The sequence is that of Large ribosomal subunit protein bL32 from Renibacterium salmoninarum (strain ATCC 33209 / DSM 20767 / JCM 11484 / NBRC 15589 / NCIMB 2235).